Consider the following 406-residue polypeptide: Corticosteroid-binding globulin (406 aa).

A signal peptide spans 1 to 22 (MLLTLYACLLWLSTSGLWTSQA). N-linked (GlcNAc...) asparagine glycans are attached at residues N95, N119, and N223. Residue Q253 participates in cortisol binding. The N-linked (GlcNAc...) asparagine glycan is linked to N259. Residues Q285 and W394 each contribute to the cortisol site.

The protein belongs to the serpin family.

The protein localises to the secreted. Major transport protein for glucocorticoids and progestins in the blood of almost all vertebrate species. The polypeptide is Corticosteroid-binding globulin (Serpina6) (Sus scrofa (Pig)).